A 461-amino-acid chain; its full sequence is Ribulose bisphosphate carboxylase (461 aa).

Asparagine 112 lines the substrate pocket. Lysine 167 functions as the Proton acceptor in the catalytic mechanism. Position 169 (lysine 169) interacts with substrate. The Mg(2+) site is built by lysine 192, aspartate 194, and glutamate 195. An N6-carboxylysine modification is found at lysine 192. Histidine 288 serves as the catalytic Proton acceptor. Positions 289, 322, and 369 each coordinate substrate.

Belongs to the RuBisCO large chain family. Type II subfamily. As to quaternary structure, homodimer. The cofactor is Mg(2+).

It carries out the reaction 2 (2R)-3-phosphoglycerate + 2 H(+) = D-ribulose 1,5-bisphosphate + CO2 + H2O. The catalysed reaction is D-ribulose 1,5-bisphosphate + O2 = 2-phosphoglycolate + (2R)-3-phosphoglycerate + 2 H(+). In terms of biological role, ruBisCO catalyzes two reactions: the carboxylation of D-ribulose 1,5-bisphosphate, the primary event in carbon dioxide fixation, as well as the oxidative fragmentation of the pentose substrate. Both reactions occur simultaneously and in competition at the same active site. This Rhodopseudomonas palustris (strain HaA2) protein is Ribulose bisphosphate carboxylase.